Consider the following 42-residue polypeptide: Aryl-alcohol dehydrogenase (42 aa).

Belongs to the zinc-containing alcohol dehydrogenase family. Homodimer. The cofactor is Zn(2+).

The catalysed reaction is an aromatic primary alcohol + NAD(+) = an aromatic aldehyde + NADH + H(+). Its function is as follows. Oxidizes primary alcohols with an aromatic or cyclohex-1-ene ring. It is highly specific for benzyl alcohol. This is Aryl-alcohol dehydrogenase from Acinetobacter guillouiae (Acinetobacter genomosp. 11).